Consider the following 226-residue polypeptide: Putative uroporphyrinogen-III synthase (226 aa).

Belongs to the uroporphyrinogen-III synthase family.

It carries out the reaction hydroxymethylbilane = uroporphyrinogen III + H2O. The protein operates within porphyrin-containing compound metabolism; protoporphyrin-IX biosynthesis; coproporphyrinogen-III from 5-aminolevulinate: step 3/4. Catalyzes cyclization of the linear tetrapyrrole, hydroxymethylbilane, to the macrocyclic uroporphyrinogen III. The chain is Putative uroporphyrinogen-III synthase from Archaeoglobus fulgidus (strain ATCC 49558 / DSM 4304 / JCM 9628 / NBRC 100126 / VC-16).